Reading from the N-terminus, the 396-residue chain is L-lactate dehydrogenase (396 aa).

The 380-residue stretch at 1–380 (MIISAASDYR…TQDSLVQGLG (380 aa)) folds into the FMN hydroxy acid dehydrogenase domain. Tyr-24 is a binding site for substrate. 2 residues coordinate FMN: Ser-106 and Gln-127. Tyr-129 contacts substrate. Thr-155 is an FMN binding site. A substrate-binding site is contributed by Arg-164. Lys-251 provides a ligand contact to FMN. His-275 (proton acceptor) is an active-site residue. Arg-278 provides a ligand contact to substrate. 306–330 (DSGIRNGLDVVRMIALGADTVLLGR) is a binding site for FMN.

It belongs to the FMN-dependent alpha-hydroxy acid dehydrogenase family. FMN is required as a cofactor.

The protein resides in the cell inner membrane. The catalysed reaction is (S)-lactate + A = pyruvate + AH2. Catalyzes the conversion of L-lactate to pyruvate. Is coupled to the respiratory chain. This chain is L-lactate dehydrogenase, found in Escherichia coli O7:K1 (strain IAI39 / ExPEC).